A 2430-amino-acid polypeptide reads, in one-letter code: DNA-directed RNA polymerase subunit beta'' (2430 aa).

Zn(2+) contacts are provided by Cys336, Cys455, Cys462, and Cys465.

The protein belongs to the RNA polymerase beta' chain family. RpoC2 subfamily. As to quaternary structure, in plastids the minimal PEP RNA polymerase catalytic core is composed of four subunits: alpha, beta, beta', and beta''. When a (nuclear-encoded) sigma factor is associated with the core the holoenzyme is formed, which can initiate transcription. The cofactor is Zn(2+).

It is found in the plastid. It localises to the chloroplast. The enzyme catalyses RNA(n) + a ribonucleoside 5'-triphosphate = RNA(n+1) + diphosphate. DNA-dependent RNA polymerase catalyzes the transcription of DNA into RNA using the four ribonucleoside triphosphates as substrates. The sequence is that of DNA-directed RNA polymerase subunit beta'' from Stigeoclonium helveticum (Green alga).